A 178-amino-acid chain; its full sequence is PRA1 family protein 2 (178 aa).

Residues 1-41 (MSEVRLPPLRALDDFVLGSARLVAPDPCDPQRWCHRVINNL) lie on the Cytoplasmic side of the membrane. Residues 42 to 62 (LYYQTNYLICFGLGLALAGYV) traverse the membrane as a helical segment. Over 63 to 64 (RP) the chain is Extracellular. Residues 65 to 85 (LHTLLSALVVAVALGMLVCAA) form a helical membrane-spanning segment. The Cytoplasmic portion of the chain corresponds to 86–96 (ENRAAVRRCRR). The chain crosses the membrane as a helical span at residues 97–119 (SHPAACLAAVLAVGFLVLWAAGG). Residues 120–122 (AGT) are Extracellular-facing. Residues 123-140 (FLLSIAGPVLLILVHASL) form a helical membrane-spanning segment. The Cytoplasmic portion of the chain corresponds to 141-178 (RLRNLKNKIENKIESIGLKRTPMGLLLEALGQEQEAGS).

This sequence belongs to the PRA1 family. In terms of assembly, interacts with CCR5 and GDE1.

Its subcellular location is the endosome membrane. May be involved in ER/Golgi transport and vesicular traffic. Plays a proapoptotic role in cerulenin-induced neuroblastoma apoptosis. This Bos taurus (Bovine) protein is PRA1 family protein 2 (PRAF2).